A 563-amino-acid chain; its full sequence is Coiled-coil domain-containing protein 38 (563 aa).

3 coiled-coil regions span residues 129–212, 384–415, and 485–522; these read KRNT…KTEF, NIEF…RSRL, and ERMK…AVAQ. The tract at residues 521-550 is disordered; it reads AQPKKKLGRRLVYHSKPPSANKQQLPLVNE. The span at 523-533 shows a compositional bias: basic residues; that stretch reads PKKKLGRRLVY.

In terms of assembly, interacts with CCDC42, CFAP53, IFT88 and ODF2. Interacts with CCDC146. Interacts with TEKT3. Interacts with ubiquitinated histone H2A.

The protein localises to the cytoplasm. It is found in the cytoskeleton. It localises to the microtubule organizing center. The protein resides in the centrosome. Its subcellular location is the perinuclear region. The protein localises to the cell projection. It is found in the cilium. It localises to the flagellum. Functionally, essential for male fertility. Required for sperm flagellum biogenesis. Also required for acrosome biogenesis. Required for the attachment of developing acrosomes to the nucleus during spermiogenesis and may be involved in the transport of fibrous sheath components. This Macaca fascicularis (Crab-eating macaque) protein is Coiled-coil domain-containing protein 38 (CCDC38).